The primary structure comprises 108 residues: Guanine nucleotide-binding protein subunit gamma (108 aa).

Residue Cys-104 is the site of S-palmitoyl cysteine attachment. Cys-105 is subject to Cysteine methyl ester. Cys-105 carries the S-farnesyl cysteine lipid modification. The propeptide at 106–108 (VIS) is removed in mature form.

It belongs to the G protein gamma family. G proteins are composed of 3 units, alpha, beta and gamma.

The protein localises to the membrane. The chain is Guanine nucleotide-binding protein subunit gamma from Yarrowia lipolytica (strain CLIB 122 / E 150) (Yeast).